The primary structure comprises 634 residues: Threonine--tRNA ligase (634 aa).

Residues 1 to 61 form the TGS domain; the sequence is MINIRFPDGS…NSNCELRLIT (61 aa). The segment at 241–532 is catalytic; that stretch reads DHRKIGKVLD…LIEHYAGNLP (292 aa). The Zn(2+) site is built by Cys332, His383, and His509.

The protein belongs to the class-II aminoacyl-tRNA synthetase family. As to quaternary structure, homodimer. Zn(2+) is required as a cofactor.

It localises to the cytoplasm. The enzyme catalyses tRNA(Thr) + L-threonine + ATP = L-threonyl-tRNA(Thr) + AMP + diphosphate + H(+). Functionally, catalyzes the attachment of threonine to tRNA(Thr) in a two-step reaction: L-threonine is first activated by ATP to form Thr-AMP and then transferred to the acceptor end of tRNA(Thr). Also edits incorrectly charged L-seryl-tRNA(Thr). This Francisella tularensis subsp. tularensis (strain WY96-3418) protein is Threonine--tRNA ligase.